We begin with the raw amino-acid sequence, 417 residues long: Probable dihydrofolate synthetase (417 aa).

34–37 (GKGS) is a binding site for ATP. Residues S58, E123, and H151 each coordinate Mg(2+). Residues R274 and D289 each coordinate ATP.

It belongs to the folylpolyglutamate synthase family.

It catalyses the reaction 7,8-dihydropteroate + L-glutamate + ATP = 7,8-dihydrofolate + ADP + phosphate + H(+). It functions in the pathway cofactor biosynthesis; tetrahydrofolylpolyglutamate biosynthesis. Functionally, glutamate-adding enzyme which catalyzes the binding of the first glutamyl side chain to dihydropteroate. Leads to the de nove synthesis of tetrahydrofolate. de novo. The chain is Probable dihydrofolate synthetase (fol3) from Schizosaccharomyces pombe (strain 972 / ATCC 24843) (Fission yeast).